The following is a 140-amino-acid chain: Putative pre-16S rRNA nuclease (140 aa).

Belongs to the YqgF nuclease family.

It is found in the cytoplasm. Could be a nuclease involved in processing of the 5'-end of pre-16S rRNA. In Vibrio vulnificus (strain YJ016), this protein is Putative pre-16S rRNA nuclease.